The chain runs to 59 residues: UPF0434 protein GOX0764 (59 aa).

This sequence belongs to the UPF0434 family.

This chain is UPF0434 protein GOX0764, found in Gluconobacter oxydans (strain 621H) (Gluconobacter suboxydans).